Reading from the N-terminus, the 286-residue chain is ATP synthase gamma chain (286 aa).

The protein belongs to the ATPase gamma chain family. As to quaternary structure, F-type ATPases have 2 components, CF(1) - the catalytic core - and CF(0) - the membrane proton channel. CF(1) has five subunits: alpha(3), beta(3), gamma(1), delta(1), epsilon(1). CF(0) has three main subunits: a, b and c.

The protein resides in the cell inner membrane. Its function is as follows. Produces ATP from ADP in the presence of a proton gradient across the membrane. The gamma chain is believed to be important in regulating ATPase activity and the flow of protons through the CF(0) complex. This chain is ATP synthase gamma chain, found in Flavobacterium johnsoniae (strain ATCC 17061 / DSM 2064 / JCM 8514 / BCRC 14874 / CCUG 350202 / NBRC 14942 / NCIMB 11054 / UW101) (Cytophaga johnsonae).